Reading from the N-terminus, the 395-residue chain is ATP-dependent RNA helicase eIF4A (395 aa).

At Ser-2 the chain carries N-acetylserine. The Q motif motif lies at 22-50; it reads YKFDDMELDENLLRGVFGYGFEEPSAIQQ. The region spanning 53-222 is the Helicase ATP-binding domain; the sequence is IMPIIEGHDV…TKFMRNPVRI (170 aa). An ATP-binding site is contributed by 66 to 73; sequence AQSGTGKT. Thr-73 is subject to Phosphothreonine. Phosphoserine is present on residues Ser-77 and Ser-129. Thr-146 carries the phosphothreonine modification. The DEAD box motif lies at 170–173; that stretch reads DEAD. Residues 233-394 enclose the Helicase C-terminal domain; the sequence is GIKQFYVNVE…ELPSDIATLL (162 aa).

The protein belongs to the DEAD box helicase family. eIF4A subfamily. Component of the eIF4F complex, which composition varies with external and internal environmental conditions. It is composed of at least eIF4A, eIF4E and eIF4G.

The protein localises to the cytoplasm. The catalysed reaction is ATP + H2O = ADP + phosphate + H(+). Functionally, ATP-dependent RNA helicase which is a subunit of the eIF4F complex involved in cap recognition and is required for mRNA binding to ribosome. In the current model of translation initiation, eIF4A unwinds RNA secondary structures in the 5'-UTR of mRNAs which is necessary to allow efficient binding of the small ribosomal subunit, and subsequent scanning for the initiator codon. In Saccharomyces cerevisiae (strain YJM789) (Baker's yeast), this protein is ATP-dependent RNA helicase eIF4A (TIF1).